Consider the following 146-residue polypeptide: Hemoglobin subunit beta (146 aa).

Valine 1 carries the post-translational modification N-acetylvaline. The Globin domain maps to 2 to 146 (QLSGEEKAAV…VANALAHKYH (145 aa)). Position 44 is a phosphoserine (serine 44). At lysine 59 the chain carries N6-acetyllysine. Histidine 63 provides a ligand contact to heme b. Lysine 82 is subject to N6-acetyllysine. Histidine 92 provides a ligand contact to heme b. Cysteine 93 is subject to S-nitrosocysteine. Lysine 144 is subject to N6-acetyllysine.

The protein belongs to the globin family. As to quaternary structure, heterotetramer of two alpha chains and two beta chains. Red blood cells.

Functionally, involved in oxygen transport from the lung to the various peripheral tissues. This Equus hemionus kulan (Turkmenian kulan) protein is Hemoglobin subunit beta (HBB).